A 616-amino-acid chain; its full sequence is Chaperone protein HscA homolog (616 aa).

The protein belongs to the heat shock protein 70 family.

Chaperone involved in the maturation of iron-sulfur cluster-containing proteins. Has a low intrinsic ATPase activity which is markedly stimulated by HscB. The sequence is that of Chaperone protein HscA homolog from Histophilus somni (strain 129Pt) (Haemophilus somnus).